Here is a 267-residue protein sequence, read N- to C-terminus: MTENRITALLRQDKKLLLAYYMPEFPVAGATLPVLEALQESGADIIELGIPFSDPVGDGPVIQEAAHRSIANGVSLHRLLDIVGRARRGEGCRKITVPILLMGYCNPLIAYGGDCFLTDATEAGIDGLLLPDLPPEEAGEFLERAKAFSMTVVFLISPVTPPERIEMIDGMSTDFSYCLAVNATTGTAKLSEGDTEASVDEYLKRVRRHTKKKFVVGFGIKDRERVEHMWRFADGAVVGTALLQNIASAGTPQEAARLAGEFWRTLR.

Active-site proton acceptor residues include Glu47 and Asp58.

This sequence belongs to the TrpA family. As to quaternary structure, tetramer of two alpha and two beta chains.

The enzyme catalyses (1S,2R)-1-C-(indol-3-yl)glycerol 3-phosphate + L-serine = D-glyceraldehyde 3-phosphate + L-tryptophan + H2O. Its pathway is amino-acid biosynthesis; L-tryptophan biosynthesis; L-tryptophan from chorismate: step 5/5. The alpha subunit is responsible for the aldol cleavage of indoleglycerol phosphate to indole and glyceraldehyde 3-phosphate. This is Tryptophan synthase alpha chain from Chlorobium phaeovibrioides (strain DSM 265 / 1930) (Prosthecochloris vibrioformis (strain DSM 265)).